The primary structure comprises 295 residues: Bifunctional protein FolD (295 aa).

Residues 166 to 168 (GRS), Ser-191, and Ile-232 contribute to the NADP(+) site.

It belongs to the tetrahydrofolate dehydrogenase/cyclohydrolase family. Homodimer.

It carries out the reaction (6R)-5,10-methylene-5,6,7,8-tetrahydrofolate + NADP(+) = (6R)-5,10-methenyltetrahydrofolate + NADPH. The enzyme catalyses (6R)-5,10-methenyltetrahydrofolate + H2O = (6R)-10-formyltetrahydrofolate + H(+). It functions in the pathway one-carbon metabolism; tetrahydrofolate interconversion. In terms of biological role, catalyzes the oxidation of 5,10-methylenetetrahydrofolate to 5,10-methenyltetrahydrofolate and then the hydrolysis of 5,10-methenyltetrahydrofolate to 10-formyltetrahydrofolate. In Rhodopseudomonas palustris (strain ATCC BAA-98 / CGA009), this protein is Bifunctional protein FolD.